Consider the following 96-residue polypeptide: Co-chaperonin GroES (96 aa).

The protein belongs to the GroES chaperonin family. As to quaternary structure, heptamer of 7 subunits arranged in a ring. Interacts with the chaperonin GroEL.

It localises to the cytoplasm. Together with the chaperonin GroEL, plays an essential role in assisting protein folding. The GroEL-GroES system forms a nano-cage that allows encapsulation of the non-native substrate proteins and provides a physical environment optimized to promote and accelerate protein folding. GroES binds to the apical surface of the GroEL ring, thereby capping the opening of the GroEL channel. The protein is Co-chaperonin GroES of Cupriavidus taiwanensis (strain DSM 17343 / BCRC 17206 / CCUG 44338 / CIP 107171 / LMG 19424 / R1) (Ralstonia taiwanensis (strain LMG 19424)).